A 297-amino-acid polypeptide reads, in one-letter code: 4-hydroxy-tetrahydrodipicolinate synthase (297 aa).

Threonine 46 contributes to the pyruvate binding site. Catalysis depends on tyrosine 134, which acts as the Proton donor/acceptor. The active-site Schiff-base intermediate with substrate is the lysine 162. Isoleucine 209 lines the pyruvate pocket.

This sequence belongs to the DapA family. As to quaternary structure, homotetramer; dimer of dimers.

It is found in the cytoplasm. It catalyses the reaction L-aspartate 4-semialdehyde + pyruvate = (2S,4S)-4-hydroxy-2,3,4,5-tetrahydrodipicolinate + H2O + H(+). It participates in amino-acid biosynthesis; L-lysine biosynthesis via DAP pathway; (S)-tetrahydrodipicolinate from L-aspartate: step 3/4. Functionally, catalyzes the condensation of (S)-aspartate-beta-semialdehyde [(S)-ASA] and pyruvate to 4-hydroxy-tetrahydrodipicolinate (HTPA). The polypeptide is 4-hydroxy-tetrahydrodipicolinate synthase (Methanosphaera stadtmanae (strain ATCC 43021 / DSM 3091 / JCM 11832 / MCB-3)).